The chain runs to 89 residues: MTIKLINIGFGNIISANRMISIVSPESAPIKRMIQDARDRGMLIDATYGRRTRAVVVMDSDHIILSAVQPETVAHRLSVKEEIMDEGQG.

The protein belongs to the RemA family.

The chain is Putative regulatory protein RBAM_015500 from Bacillus velezensis (strain DSM 23117 / BGSC 10A6 / LMG 26770 / FZB42) (Bacillus amyloliquefaciens subsp. plantarum).